The chain runs to 350 residues: Proton-activated chloride channel (350 aa).

The tract at residues Met-1–Asn-51 is disordered. Residues Met-1–Asn-63 are Cytoplasmic-facing. A helical membrane pass occupies residues Val-64–Val-84. Residues Tyr-85 to Asp-297 lie on the Extracellular side of the membrane. Residues Ile-298–Phe-318 traverse the membrane as a helical segment. At Lys-319–Ser-350 the chain is on the cytoplasmic side.

The protein belongs to the proton-activated chloride channel family.

The protein resides in the cell membrane. It carries out the reaction chloride(in) = chloride(out). Functionally, chloride channel gated by pH that facilitates the entry of chloride ions into cells upon exposure to extracellular acidic pH. In Xenopus laevis (African clawed frog), this protein is Proton-activated chloride channel.